We begin with the raw amino-acid sequence, 31 residues long: Photosystem II reaction center protein T (31 aa).

Residues 3–23 (ALVYTFLLVGTLGIIFFSIFF) form a helical membrane-spanning segment.

It belongs to the PsbT family. In terms of assembly, PSII is composed of 1 copy each of membrane proteins PsbA, PsbB, PsbC, PsbD, PsbE, PsbF, PsbH, PsbI, PsbJ, PsbK, PsbL, PsbM, PsbT, PsbY, PsbZ, Psb30/Ycf12, at least 3 peripheral proteins of the oxygen-evolving complex and a large number of cofactors. It forms dimeric complexes.

It localises to the plastid. It is found in the chloroplast thylakoid membrane. Functionally, found at the monomer-monomer interface of the photosystem II (PS II) dimer, plays a role in assembly and dimerization of PSII. PSII is a light-driven water plastoquinone oxidoreductase, using light energy to abstract electrons from H(2)O, generating a proton gradient subsequently used for ATP formation. This chain is Photosystem II reaction center protein T, found in Tupiella akineta (Green alga).